A 250-amino-acid chain; its full sequence is 5-oxoprolinase subunit A (250 aa).

Belongs to the LamB/PxpA family. As to quaternary structure, forms a complex composed of PxpA, PxpB and PxpC.

It carries out the reaction 5-oxo-L-proline + ATP + 2 H2O = L-glutamate + ADP + phosphate + H(+). Its function is as follows. Catalyzes the cleavage of 5-oxoproline to form L-glutamate coupled to the hydrolysis of ATP to ADP and inorganic phosphate. This Nocardia farcinica (strain IFM 10152) protein is 5-oxoprolinase subunit A.